Here is a 312-residue protein sequence, read N- to C-terminus: Malate dehydrogenase (312 aa).

Residues 7-13 (GAAGGIG) and Asp34 each bind NAD(+). Residues Arg81 and Arg87 each coordinate substrate. Residues Asn94 and 117 to 119 (ITN) each bind NAD(+). The substrate site is built by Asn119 and Arg153. Catalysis depends on His177, which acts as the Proton acceptor. Met227 serves as a coordination point for NAD(+).

Belongs to the LDH/MDH superfamily. MDH type 1 family. In terms of assembly, homodimer.

It carries out the reaction (S)-malate + NAD(+) = oxaloacetate + NADH + H(+). Its function is as follows. Catalyzes the reversible oxidation of malate to oxaloacetate. In Salmonella agona (strain SL483), this protein is Malate dehydrogenase.